The chain runs to 125 residues: Small ribosomal subunit protein uS11m (125 aa).

The protein belongs to the universal ribosomal protein uS11 family.

It localises to the mitochondrion. This Marchantia polymorpha (Common liverwort) protein is Small ribosomal subunit protein uS11m (RPS11).